Consider the following 691-residue polypeptide: Two-component response regulator ORR21 (691 aa).

The 116-residue stretch at 17–132 (KVLVVDDDPT…ELKNIWQHVI (116 aa)) folds into the Response regulatory domain. At Asp68 the chain carries 4-aspartylphosphate. Positions 139–155 (NKEHEHSGSLDDTDRTR) are enriched in basic and acidic residues. 2 disordered regions span residues 139–204 (NKEH…KKPR) and 616–647 (SHPG…HGFV). The myb-like GARP DNA-binding region spans 199–258 (TSKKPRVVWSVELHQQFVNAVNHLGIDKAVPKKILELMNVPGLTRENVASHLQKFRLYLK). A compositionally biased stretch (low complexity) spans 616–628 (SHPGSSSSSFQSS).

It belongs to the ARR family. Type-B subfamily. Two-component system major event consists of a His-to-Asp phosphorelay between a sensor histidine kinase (HK) and a response regulator (RR). In plants, the His-to-Asp phosphorelay involves an additional intermediate named Histidine-containing phosphotransfer protein (HPt). This multistep phosphorelay consists of a His-Asp-His-Asp sequential transfer of a phosphate group between first a His and an Asp of the HK protein, followed by the transfer to a conserved His of the HPt protein and finally the transfer to an Asp in the receiver domain of the RR protein.

Its subcellular location is the nucleus. Transcriptional activator that binds specific DNA sequence. Functions as a response regulator involved in His-to-Asp phosphorelay signal transduction system. Phosphorylation of the Asp residue in the receiver domain activates the ability of the protein to promote the transcription of target genes. May directly activate some type-A response regulators in response to cytokinins. This Oryza sativa subsp. indica (Rice) protein is Two-component response regulator ORR21.